Here is a 339-residue protein sequence, read N- to C-terminus: RNA polymerase II holoenzyme cyclin-like subunit (339 aa).

The disordered stretch occupies residues 48–67 (PNSADSSNGNAANNGGGNGR). The span at 49–60 (NSADSSNGNAAN) shows a compositional bias: low complexity. A Cyclin N-terminal domain is found at 93 to 194 (RIYCYFLIMK…LIEELQCYLI (102 aa)).

The protein belongs to the cyclin family. Cyclin C subfamily. In terms of assembly, component of the SRB8-11 complex, a regulatory module of the Mediator complex.

Its subcellular location is the nucleus. In terms of biological role, component of the SRB8-11 complex. The SRB8-11 complex is a regulatory module of the Mediator complex which is itself involved in regulation of basal and activated RNA polymerase II-dependent transcription. The SRB8-11 complex may be involved in the transcriptional repression of a subset of genes regulated by Mediator. It may inhibit the association of the Mediator complex with RNA polymerase II to form the holoenzyme complex. The SRB8-11 complex phosphorylates the C-terminal domain (CTD) of the largest subunit of RNA polymerase II. The sequence is that of RNA polymerase II holoenzyme cyclin-like subunit (SSN8) from Candida glabrata (strain ATCC 2001 / BCRC 20586 / JCM 3761 / NBRC 0622 / NRRL Y-65 / CBS 138) (Yeast).